The chain runs to 92 residues: Phospholemman (92 aa).

Residues 1-20 (MASLSHILVLCVGLLAMVNA) form the signal peptide. The Extracellular segment spans residues 21–35 (EAPQEHDPFTYDYQS). Residues 36–56 (LRIGGLIIAGILFILGILIVL) form a helical membrane-spanning segment. Residues 57–92 (SRRCRCKFNQQQRTGEPDEEEGTFRSSIRRLSTRRR) lie on the Cytoplasmic side of the membrane. C60 carries the S-palmitoyl cysteine lipid modification. C62 is modified (S-glutathionyl cysteine; alternate). Residue C62 is the site of S-palmitoyl cysteine; alternate attachment. Positions 65 to 92 (NQQQRTGEPDEEEGTFRSSIRRLSTRRR) are disordered. A Phosphothreonine modification is found at T79. Position 82 is a phosphoserine (S82). The residue at position 83 (S83) is a Phosphoserine; by PKA and PKC. Residues 83-92 (SIRRLSTRRR) are compositionally biased toward basic residues. S88 bears the Phosphoserine; by PKA mark. Residue T89 is modified to Phosphothreonine; by PKC.

Belongs to the FXYD family. In terms of assembly, homotetramer. Monomer. Regulatory subunit of the sodium/potassium-transporting ATPase (NKA) which is composed of a catalytic alpha subunit, an auxiliary non-catalytic beta subunit and an additional regulatory subunit. The monomeric form associates with NKA while the oligomeric form does not. Interacts with the catalytic alpha-1 subunit ATP1A1. Also interacts with the catalytic alpha-2 and alpha-3 subunits ATP1A2 and ATP1A3. Very little interaction with ATP1A1, ATP1A2 or ATP1A3 when phosphorylated at Ser-83. Interacts with the non-catalytic beta-1 subunit ATP1B1. Oxidative stress decreases interaction with ATP1A1 but increases interaction with ATP1B1. Post-translationally, major plasma membrane substrate for cAMP-dependent protein kinase (PKA) and protein kinase C (PKC) in several different tissues. Phosphorylated in response to insulin and adrenergic stimulation. Phosphorylation at Ser-88 stimulates sodium/potassium-transporting ATPase activity while the unphosphorylated form inhibits sodium/potassium-transporting ATPase activity. Phosphorylation increases tetramerization, decreases binding to ATP1A1 and reduces inhibition of ATP1A1 activity. Phosphorylation at Ser-83 leads to greatly reduced interaction with ATP1A1, ATP1A2 and ATP1A3. May be phosphorylated by DMPK. Palmitoylation increases half-life and stability and is enhanced upon phosphorylation at Ser-88 by PKA. In terms of tissue distribution, in the brain, detected in cerebellum and choroid plexus (at protein level).

It is found in the cell membrane. The protein resides in the sarcolemma. It localises to the apical cell membrane. The protein localises to the membrane. Its subcellular location is the caveola. It is found in the T-tubule. In terms of biological role, associates with and regulates the activity of the sodium/potassium-transporting ATPase (NKA) which transports Na(+) out of the cell and K(+) into the cell. Inhibits NKA activity in its unphosphorylated state and stimulates activity when phosphorylated. Reduces glutathionylation of the NKA beta-1 subunit ATP1B1, thus reversing glutathionylation-mediated inhibition of ATP1B1. Contributes to female sexual development by maintaining the excitability of neurons which secrete gonadotropin-releasing hormone. This is Phospholemman from Bos taurus (Bovine).